The following is a 436-amino-acid chain: tRNA-2-methylthio-N(6)-dimethylallyladenosine synthase (436 aa).

The MTTase N-terminal domain occupies 5–121; it reads RKLFIKTYGC…LPDMLERTEG (117 aa). [4Fe-4S] cluster is bound by residues Cys14, Cys50, Cys84, Cys158, Cys162, and Cys165. Residues 144–373 enclose the Radical SAM core domain; that stretch reads ALRGPTAFLT…LGEQQRAAQA (230 aa). The 63-residue stretch at 373-435 folds into the TRAM domain; it reads AAMVGRELGV…PNSLAGERIG (63 aa).

It belongs to the methylthiotransferase family. MiaB subfamily. Monomer. It depends on [4Fe-4S] cluster as a cofactor.

It localises to the cytoplasm. It carries out the reaction N(6)-dimethylallyladenosine(37) in tRNA + (sulfur carrier)-SH + AH2 + 2 S-adenosyl-L-methionine = 2-methylsulfanyl-N(6)-dimethylallyladenosine(37) in tRNA + (sulfur carrier)-H + 5'-deoxyadenosine + L-methionine + A + S-adenosyl-L-homocysteine + 2 H(+). Its function is as follows. Catalyzes the methylthiolation of N6-(dimethylallyl)adenosine (i(6)A), leading to the formation of 2-methylthio-N6-(dimethylallyl)adenosine (ms(2)i(6)A) at position 37 in tRNAs that read codons beginning with uridine. This Cereibacter sphaeroides (strain ATCC 17025 / ATH 2.4.3) (Rhodobacter sphaeroides) protein is tRNA-2-methylthio-N(6)-dimethylallyladenosine synthase.